A 162-amino-acid chain; its full sequence is HTH-type transcriptional regulator IscR (162 aa).

The HTH rrf2-type domain occupies 2 to 131 (RLTSKGRYAV…NNITLGELVN (130 aa)). A DNA-binding region (H-T-H motif) is located at residues 28-51 (LADISERQGISLSYLEQLFSRLRK). [2Fe-2S] cluster is bound by residues Cys-92, Cys-98, and Cys-104. The interval 140–162 (GRQHTHDAPRTRTQDAIDVKLRA) is disordered. The span at 143–162 (HTHDAPRTRTQDAIDVKLRA) shows a compositional bias: basic and acidic residues.

The cofactor is [2Fe-2S] cluster.

In terms of biological role, regulates the transcription of several operons and genes involved in the biogenesis of Fe-S clusters and Fe-S-containing proteins. This chain is HTH-type transcriptional regulator IscR, found in Shigella flexneri.